A 410-amino-acid chain; its full sequence is MGVKAAQTGIWASQGQSIRVVGFQAQTAHRAICLLGFVVLVLLQCCSAYKLVCYYTSWSQYREGDGSCFPDAIDRFLCTHIIYSFANISNDHIDTWEWNDVTLYGMLNTLKNRNPNLKTLLSVGGWNFGSQRFSNIASNTQSRRTFIKSVPPFLRTHGFDGLDLAWLYPGQRDKQHFTTLIKEMRAEFIKEAQPGKKQLLLSAAVSAGKVTIDSSYDIAKISQHLDFISIMTYDFHGAWRGTTGHHSPLFRGQEDASPDRFSNTDYAVGYMLRLEAPASKLVMGIPTFGRSFTLASSETGVGAPISGPGIPGRFTKEAGTLAYYEICDFLRGATVHRILGQQVPYATKGNQWVGYDDQESVKSKVQYLKERQLAGAMVWALDLDDFQGSFCGQDLRFPLTNAIKDALAAT.

The first 48 residues, 1–48 (MGVKAAQTGIWASQGQSIRVVGFQAQTAHRAICLLGFVVLVLLQCCSA), serve as a signal peptide directing secretion. Residues 49–410 (YKLVCYYTSW…NAIKDALAAT (362 aa)) enclose the GH18 domain. A disulfide bond links Cys-53 and Cys-78. Asn-87 carries an N-linked (GlcNAc...) asparagine glycan. Chitin is bound by residues 97–98 (EW), 124–127 (GGWN), Tyr-168, 231–234 (MTYD), and Arg-290. A disulfide bridge links Cys-327 with Cys-391. The interval 351-365 (QWVGYDDQESVKSKV) is important for AKT1 activation and IL8 production. Trp-379 serves as a coordination point for chitin.

This sequence belongs to the glycosyl hydrolase 18 family. In terms of assembly, monomer.

Its subcellular location is the secreted. The protein resides in the extracellular space. It is found in the cytoplasm. The protein localises to the perinuclear region. It localises to the endoplasmic reticulum. In terms of biological role, carbohydrate-binding lectin with a preference for chitin. Has no chitinase activity. May play a role in tissue remodeling and in the capacity of cells to respond to and cope with changes in their environment. Plays a role in T-helper cell type 2 (Th2) inflammatory response and IL-13-induced inflammation, regulating allergen sensitization, inflammatory cell apoptosis, dendritic cell accumulation and M2 macrophage differentiation. Facilitates invasion of pathogenic enteric bacteria into colonic mucosa and lymphoid organs. Mediates activation of AKT1 signaling pathway and subsequent IL8 production in colonic epithelial cells. Regulates antibacterial responses in lung by contributing to macrophage bacterial killing, controlling bacterial dissemination and augmenting host tolerance. Also regulates hyperoxia-induced injury, inflammation and epithelial apoptosis in lung. The sequence is that of Chitinase-3-like protein 1 (CHI3L1) from Pongo abelii (Sumatran orangutan).